A 454-amino-acid polypeptide reads, in one-letter code: MDAHAINERYVGPRCHRLAHVVLPRTFLLHHAIPLEPEIIFSTYTRFSRSPGSSRRLVVCGKRVLPGEENQLASSPSGLALSLPLFSHDGNFHPFDISVLRISCPGSNLSLTVRFLYLSLVVAMGAGRNNARSPTVDGVSPPEGAVAHPLEELQRLARATPDPALTRGPLQVLTGLLRAGSDGDRATHHMALEAPGTVRGESLDPPVSQKGPARTRHRPPPVRLSFNPVNADVPATWRDATNVYSGAPYYVCVYERGGRQEDDWLPIPLSFPEEPVPPPPGLVFMDDLFINTKQCDFVDTLEAACRTQGYTLRQRVPVAIPRDAEIADAVKSHFLEACLVLRGLASEASAWIRAATSPPLGRHACWMDVLGLWESRPHTLGLELRGVNCGGTDGDWLEILKQPDVQKTVSGSLVACVIVTPALEAWLVLPGGFAIKGRYRASKEDLVFIRGRYG.

The tract at residues 197 to 227 (TVRGESLDPPVSQKGPARTRHRPPPVRLSFN) is disordered.

This sequence belongs to the herpesviridae CVC1 protein family. As to quaternary structure, interacts (via C-terminus) with capsid vertex component 2/CVC2.

The protein localises to the virion. It localises to the host nucleus. In terms of biological role, capsid vertex-specific component that plays a role during viral DNA encapsidation, assuring correct genome cleavage and presumably stabilizing capsids that contain full-length viral genomes. In Human herpesvirus 8 type P (isolate GK18) (HHV-8), this protein is Capsid vertex component 1.